The chain runs to 130 residues: 3-aminoacrylate deaminase RutC (130 aa).

The protein belongs to the RutC family.

The catalysed reaction is (Z)-3-aminoacrylate + H2O + H(+) = 3-oxopropanoate + NH4(+). Its function is as follows. Involved in pyrimidine catabolism. Catalyzes the deamination of 3-aminoacrylate to malonic semialdehyde, a reaction that can also occur spontaneously. RutC may facilitate the reaction and modulate the metabolic fitness, rather than catalyzing essential functions. In Methylorubrum extorquens (strain CM4 / NCIMB 13688) (Methylobacterium extorquens), this protein is 3-aminoacrylate deaminase RutC.